The sequence spans 627 residues: Myelin-associated glycoprotein (627 aa).

The signal sequence occupies residues 1-19 (MIFLATLPLFWIMISASRG). An interaction with RTN4R and RTN4RL2 region spans residues 20-325 (GHWGAWMPST…RTVELSVMYA (306 aa)). The Extracellular segment spans residues 20–516 (GHWGAWMPST…HRLMWAKIGP (497 aa)). Residue W22 is glycosylated (C-linked (Man) tryptophan). Positions 22-120 (WGAWMPSTIS…LGGKYYFRGD (99 aa)) constitute an Ig-like V-type domain. Cystine bridges form between C37–C165, C42–C100, and C159–C217. 65–67 (YPK) provides a ligand contact to a ganglioside GT1b (d18:1(4E)). The N-linked (GlcNAc...) asparagine glycan is linked to N99. A ganglioside GT1b (d18:1(4E)) is bound by residues R118 and 124–128 (YNQYT). 4 Ig-like C2-type domains span residues 139–237 (NTPN…LDVK), 241–325 (VIVE…VMYA), 327–412 (WKPT…VEFA), and 413–508 (PIIL…GAHR). Residues N223 and N246 are each glycosylated (N-linked (GlcNAc...) asparagine). C261 and C305 are disulfide-bonded. N315 and N332 each carry an N-linked (GlcNAc...) asparagine glycan. A disulfide bridge links C347 with C392. Residue N406 is glycosylated (N-linked (GlcNAc...) asparagine). 2 disulfide bridges follow: C421–C430 and C432–C488. Residues N450 and N454 are each glycosylated (N-linked (GlcNAc...) asparagine). The chain crosses the membrane as a helical span at residues 517 to 536 (VGAVVAFAILIAIVCYITQT). C531 carries the S-palmitoyl cysteine lipid modification. Residues 537–627 (RRKKNVTESS…LAEYAEIRVK (91 aa)) lie on the Cytoplasmic side of the membrane. Residues S545, S547, S549, and S591 each carry the phosphoserine modification. The segment at 578-627 (LGSERRLLGLRGESPELDLSYSHSDLGKRPTKDSYTLTEELAEYAEIRVK) is required for normal axon myelination in the central nervous system.

It belongs to the immunoglobulin superfamily. SIGLEC (sialic acid binding Ig-like lectin) family. Monomer and homodimer. Interacts (via the first three N-terminal Ig-like domains) with RTN4R and RTN4RL2. Interacts with isoform 2 of BSG. In terms of processing, N-glycosylated. Post-translationally, phosphorylated on tyrosine residues. Ubiquitinated, leading to proteasomal degradation. Detected in the myelin tract in brain, especially in the corpus callosum and in peripheral nerve. Expressed by myelinating glial cells in the central and peripheral nervous system. Detected in oligodendrocyte processes before formation of compact myelin. Restricted to the periaxonal space after myelination. Isoform S-MAG is the predominant isoform in CNS and PNS of the adult (at protein level).

The protein localises to the cell membrane. The protein resides in the membrane raft. Functionally, adhesion molecule that mediates interactions between myelinating cells and neurons by binding to neuronal sialic acid-containing gangliosides and to the glycoproteins RTN4R and RTN4RL2. Not required for initial myelination, but seems to play a role in the maintenance of normal axon myelination. Protects motoneurons against apoptosis, also after injury; protection against apoptosis is probably mediated via interaction with neuronal RTN4R and RTN4RL2. Required to prevent degeneration of myelinated axons in adults; this probably depends on binding to gangliosides on the axon cell membrane. Negative regulator of neurite outgrowth that inhibits axon longitudinal growth. Negative regulator of neurite outgrowth; in dorsal root ganglion neurons the inhibition is mediated primarily via binding to neuronal RTN4R or RTN4RL2 and to a lesser degree via binding to neuronal gangliosides. In cerebellar granule cells the inhibition is mediated via binding to neuronal gangliosides. In sensory neurons, inhibition of neurite extension depends only partially on RTN4R, RTN4RL2 and gangliosides. Inhibits axon outgrowth by binding to RTN4R. Preferentially binds to alpha-2,3-linked sialic acid. Binds ganglioside Gt1b. This is Myelin-associated glycoprotein (Mag) from Mus musculus (Mouse).